A 573-amino-acid chain; its full sequence is Mitochondrial distribution and morphology protein 34 (573 aa).

Positions 1-195 constitute an SMP-LTD domain; that stretch reads MAFNFNWSPL…LPAIIHRLSL (195 aa). Disordered regions lie at residues 301–326, 349–433, 499–521, and 550–573; these read EGLG…SSPL, FSGY…RFPN, SREK…ITDA, and LVNN…AYGQ. Residues 306–316 show a composition bias toward low complexity; the sequence is GLMSPGSPALS. Residues 360 to 373 are compositionally biased toward basic residues; that stretch reads RHTKARPTKKRKKR. Basic and acidic residues predominate over residues 374–385; it reads VVDLRKQSKPTD. The segment covering 396 to 409 has biased composition (low complexity); it reads TETSTASTTFSSST.

The protein belongs to the MDM34 family. In terms of assembly, component of the ER-mitochondria encounter structure (ERMES) or MDM complex, composed of MMM1, MDM10, MDM12 and MDM34.

Its subcellular location is the mitochondrion outer membrane. Component of the ERMES/MDM complex, which serves as a molecular tether to connect the endoplasmic reticulum (ER) and mitochondria. Components of this complex are involved in the control of mitochondrial shape and protein biogenesis, and function in nonvesicular lipid trafficking between the ER and mitochondria. MDM34 is required for the interaction of the ER-resident membrane protein MMM1 and the outer mitochondrial membrane-resident beta-barrel protein MDM10. This chain is Mitochondrial distribution and morphology protein 34, found in Uncinocarpus reesii (strain UAMH 1704).